The following is a 305-amino-acid chain: Glutaminase (305 aa).

Residues S61, N113, E158, N165, Y189, Y241, and V259 each contribute to the substrate site.

The protein belongs to the glutaminase family. In terms of assembly, homotetramer.

It catalyses the reaction L-glutamine + H2O = L-glutamate + NH4(+). This chain is Glutaminase, found in Clostridium botulinum (strain Loch Maree / Type A3).